Reading from the N-terminus, the 264-residue chain is Small ribosomal subunit protein uS2 (264 aa).

A compositionally biased stretch (acidic residues) spans 243–253 (IEAAEDGEEVD). A disordered region spans residues 243 to 264 (IEAAEDGEEVDNAQLTSSQGRS). A compositionally biased stretch (polar residues) spans 255–264 (AQLTSSQGRS).

The protein belongs to the universal ribosomal protein uS2 family.

The chain is Small ribosomal subunit protein uS2 from Deinococcus geothermalis (strain DSM 11300 / CIP 105573 / AG-3a).